We begin with the raw amino-acid sequence, 221 residues long: MLGVQKKRSTRKTAARKTVVRKPAAKKTAAKKAPVRKVAAKKTVARKTVAKKTVAARKPVAKKATAKKAPVRKAVAKKTVARKTVAKKTVAARKPVAKKATAKKAPVRKVAAKKTVARKTVAKKTVAARKPVAKKATAKKAPVRKAVAKKTVAKRVASTKKSSVAVKAGVCMKKHKHTAACGRVAASGVKVCASAAKRKMNPNRSRTAHSWRQQLMKLVAR.

Basic residues-rich tracts occupy residues 1 to 50 and 59 to 70; these read MLGV…KTVA and PVAKKATAKKAP. Positions 1–70 are disordered; that stretch reads MLGVQKKRST…AKKATAKKAP (70 aa).

Belongs to the histone H1/H5 family. HCT subfamily.

Might have a role in establishing the nucleoid structure of elementary bodies. The polypeptide is Histone H1-like protein HC2 (hctB) (Chlamydia trachomatis serovar L2 (strain ATCC VR-902B / DSM 19102 / 434/Bu)).